The sequence spans 447 residues: Probable glycine dehydrogenase (decarboxylating) subunit 1 (447 aa).

This sequence belongs to the GcvP family. N-terminal subunit subfamily. The glycine cleavage system is composed of four proteins: P, T, L and H. In this organism, the P 'protein' is a heterodimer of two subunits.

It carries out the reaction N(6)-[(R)-lipoyl]-L-lysyl-[glycine-cleavage complex H protein] + glycine + H(+) = N(6)-[(R)-S(8)-aminomethyldihydrolipoyl]-L-lysyl-[glycine-cleavage complex H protein] + CO2. In terms of biological role, the glycine cleavage system catalyzes the degradation of glycine. The P protein binds the alpha-amino group of glycine through its pyridoxal phosphate cofactor; CO(2) is released and the remaining methylamine moiety is then transferred to the lipoamide cofactor of the H protein. The chain is Probable glycine dehydrogenase (decarboxylating) subunit 1 from Macrococcus caseolyticus (strain JCSC5402) (Macrococcoides caseolyticum).